The sequence spans 172 residues: 3-hydroxydecanoyl-[acyl-carrier-protein] dehydratase (172 aa).

Histidine 71 is an active-site residue.

Belongs to the thioester dehydratase family. FabA subfamily. As to quaternary structure, homodimer.

The protein localises to the cytoplasm. The enzyme catalyses a (3R)-hydroxyacyl-[ACP] = a (2E)-enoyl-[ACP] + H2O. It catalyses the reaction (3R)-hydroxydecanoyl-[ACP] = (2E)-decenoyl-[ACP] + H2O. It carries out the reaction (2E)-decenoyl-[ACP] = (3Z)-decenoyl-[ACP]. It functions in the pathway lipid metabolism; fatty acid biosynthesis. Functionally, necessary for the introduction of cis unsaturation into fatty acids. Catalyzes the dehydration of (3R)-3-hydroxydecanoyl-ACP to E-(2)-decenoyl-ACP and then its isomerization to Z-(3)-decenoyl-ACP. Can catalyze the dehydratase reaction for beta-hydroxyacyl-ACPs with saturated chain lengths up to 16:0, being most active on intermediate chain length. This Klebsiella pneumoniae subsp. pneumoniae (strain ATCC 700721 / MGH 78578) protein is 3-hydroxydecanoyl-[acyl-carrier-protein] dehydratase.